Reading from the N-terminus, the 37-residue chain is Cytochrome b6-f complex subunit 5 (37 aa).

Residues 5-25 form a helical membrane-spanning segment; sequence LLSGIVLGLVPITITGLLVTA.

It belongs to the PetG family. In terms of assembly, the 4 large subunits of the cytochrome b6-f complex are cytochrome b6, subunit IV (17 kDa polypeptide, PetD), cytochrome f and the Rieske protein, while the 4 small subunits are PetG, PetL, PetM and PetN. The complex functions as a dimer.

The protein localises to the plastid. It is found in the chloroplast thylakoid membrane. Functionally, component of the cytochrome b6-f complex, which mediates electron transfer between photosystem II (PSII) and photosystem I (PSI), cyclic electron flow around PSI, and state transitions. PetG is required for either the stability or assembly of the cytochrome b6-f complex. The protein is Cytochrome b6-f complex subunit 5 of Tupiella akineta (Green alga).